The chain runs to 777 residues: Zinc finger protein 786 (777 aa).

One can recognise a KRAB domain in the interval Leu-9–Glu-80. The C2H2-type 1; degenerate zinc finger occupies Asn-194–His-216. The segment at Ile-240–His-262 adopts a C2H2-type 2 zinc-finger fold. A C2H2-type 3; degenerate zinc finger spans residues Pro-268–Ser-291. The segment at Val-420–Leu-442 adopts a C2H2-type 4; degenerate zinc-finger fold. 11 C2H2-type zinc fingers span residues Phe-448 to His-470, Phe-476 to His-498, Phe-504 to His-526, Phe-532 to His-554, Phe-560 to His-582, Phe-588 to His-610, Phe-616 to His-638, Phe-644 to His-665, Phe-671 to His-693, Phe-699 to His-721, and Phe-727 to His-749.

The protein belongs to the krueppel C2H2-type zinc-finger protein family.

The protein resides in the nucleus. In terms of biological role, may be involved in transcriptional regulation. In Mus musculus (Mouse), this protein is Zinc finger protein 786 (Znf786).